We begin with the raw amino-acid sequence, 90 residues long: UPF0367 protein SYNPCC7002_A0153 (90 aa).

It belongs to the UPF0367 family.

This chain is UPF0367 protein SYNPCC7002_A0153, found in Picosynechococcus sp. (strain ATCC 27264 / PCC 7002 / PR-6) (Agmenellum quadruplicatum).